The chain runs to 196 residues: Protein LURP-one-related 8 (196 aa).

It belongs to the LOR family.

Might be related to the phospholipid scramblase and tubby-like superfamily of membrane tethered transcription factors. The sequence is that of Protein LURP-one-related 8 from Arabidopsis thaliana (Mouse-ear cress).